A 225-amino-acid polypeptide reads, in one-letter code: Two-component response regulator ARR8 (225 aa).

Positions 10 to 145 (HVLAVDDSLF…DLTKLKPHMM (136 aa)) constitute a Response regulatory domain. Aspartate 78 bears the 4-aspartylphosphate mark.

The protein belongs to the ARR family. Type-A subfamily. In terms of processing, two-component system major event consists of a His-to-Asp phosphorelay between a sensor histidine kinase (HK) and a response regulator (RR). In plants, the His-to-Asp phosphorelay involves an additional intermediate named Histidine-containing phosphotransfer protein (HPt). This multistep phosphorelay consists of a His-Asp-His-Asp sequential transfer of a phosphate group between first a His and an Asp of the HK protein, followed by the transfer to a conserved His of the HPt protein and finally the transfer to an Asp in the receiver domain of the RR protein. Predominantly expressed in roots.

It localises to the nucleus. Functions as a response regulator involved in His-to-Asp phosphorelay signal transduction system. Phosphorylation of the Asp residue in the receiver domain activates the ability of the protein to promote the transcription of target genes. Type-A response regulators seem to act as negative regulators of the cytokinin signaling. The chain is Two-component response regulator ARR8 (ARR8) from Arabidopsis thaliana (Mouse-ear cress).